Reading from the N-terminus, the 319-residue chain is FAD-dependent oxidoreductase FVFD30 (319 aa).

FAD-binding residues include Arg-6, Asp-18, and Lys-25. Residues Lys-129 and Gly-188 each contribute to the NAD(+) site. Residues Lys-129 and Gly-188 each contribute to the NADP(+) site. FAD is bound by residues Asp-228 and Tyr-265. Asp-228 provides a ligand contact to 6-hydroxy-FAD. An NAD(+)-binding site is contributed by Tyr-265. Residue Tyr-265 coordinates NADP(+). The chain crosses the membrane as a helical span at residues 281–301 (GVGYFGVWWGIVIGGWLASLL).

The protein belongs to the FAD-dependent oxidoreductase family.

The protein localises to the membrane. Functionally, probable FAD-dependent oxidoreductase that plays a role in the regulation of fruiting body development. The chain is FAD-dependent oxidoreductase FVFD30 from Flammulina velutipes (Agaricus velutipes).